Consider the following 1083-residue polypeptide: MSWDDAIDGVDRDTPGGRMPRAWNVAARLRAANDDIVHAQQADGLPAYAELHCLSDFSFLRGASSAEQLFARAQQCGYSALAITDECSLAGIVRGLEASRATGVRLIVGSEFTLVDGTRFVLLVENAHGYPQLCGLITTARRAASKGAYRLDRAEVQAQFRDVAPGVFALWLPGAQPQAEQGAWLQQVFGERAFLAVELHREQDDVARLHVLQALAQQLGMTALASGDVHMAQRRERIVQDTLTAIRHTLPLAECGAHLFRNGERHLRTRRALGNIYPDALLQATVELAQRCTFDISKISYTYPRELVPEGHTPTSYLRQLTEAGIRRRWPGGITAKVREDIEKELALIALKKYEAFFLTVQDVVRFAREQNILCQGRGSSANSAVCYALGITAVNPDETRLLMARFLSEKRDEPPDIDVDFEHERREEVLQYVYSKYGRERAALAATVICYRGKSAVRDVAKAFGLPPDQIALLANCYGWGNGETPMDQRIEEAGFDLANPLINKILAVTEHLRDHPRHLSQHVGGFVISDEPLSLLVPVENAAMANRTIIQWDKDDLETMKLLKVDCLALGMLTCIRKTLDLVRGHRGRNYSIATLPGGDAPTYKMIQRADTVGVFQIESRAQMAMLPRLKPAAFYDLVIEVAIVRPGPIQGDMVHPYLRRRQGREEVNYPSPAVEDILKPTLGVPLFQEQVMELLMHAADYSEDEADNLRRSMAAWRRGGDMEQHRTRVRERMQGKGYASSFIDQIFEQIKGFGSYGFPQSHAASFAKLVYASCWLKRHEPAAFACGLLNAQPMGFYSASQIVQDARRGSPERERVEVLPVDVLHSDWDNTLVGGRPWRSAADPGEQPAIRLGMRQVAGLSQVVAQRIVAARTQRAFADIGDLCLRAALDEKARLALAEAGALQGMVGNRNAARWAMAGVEARCPLLPGSPEERPVEFEAPRAGEEILADYRSVGLSLRQHPMALLRPQMRQRRILGLRELQGRRHGSGVHVAGLVTQRQRPATAKGTIFVTLEDEQGMINVIVWSHLALRRRRALLESRLLAVRGRWERVDGVEHLIAGDLYDLSNLLGDMQLPSRDFH.

Belongs to the DNA polymerase type-C family. DnaE2 subfamily.

The protein resides in the cytoplasm. It catalyses the reaction DNA(n) + a 2'-deoxyribonucleoside 5'-triphosphate = DNA(n+1) + diphosphate. Its function is as follows. DNA polymerase involved in damage-induced mutagenesis and translesion synthesis (TLS). It is not the major replicative DNA polymerase. This chain is Error-prone DNA polymerase, found in Xanthomonas axonopodis pv. citri (strain 306).